A 184-amino-acid chain; its full sequence is Elongation factor P (184 aa).

This sequence belongs to the elongation factor P family.

The protein localises to the cytoplasm. Its pathway is protein biosynthesis; polypeptide chain elongation. Functionally, involved in peptide bond synthesis. Stimulates efficient translation and peptide-bond synthesis on native or reconstituted 70S ribosomes in vitro. Probably functions indirectly by altering the affinity of the ribosome for aminoacyl-tRNA, thus increasing their reactivity as acceptors for peptidyl transferase. In Variovorax paradoxus (strain S110), this protein is Elongation factor P.